The following is a 430-amino-acid chain: Glutamine synthetase leaf isozyme, chloroplastic (430 aa).

A chloroplast-targeting transit peptide spans 1 to 49 (MAQILAPSTQWQMRITKTSPCATPITSKMWSSLVMKQTKKVAHSAKFRV). Residues 77–157 (IIAEYIWIGG…VVCDAYTPAG (81 aa)) enclose the GS beta-grasp domain. Residues 99-119 (SKPVSHPSEVPKWNYDGSSTG) form a disordered region. In terms of domain architecture, GS catalytic spans 161–430 (PTNKRHRAAE…LAAQKIALKV (270 aa)).

This sequence belongs to the glutamine synthetase family. As to quaternary structure, homooctamer.

The protein resides in the plastid. Its subcellular location is the chloroplast. It carries out the reaction L-glutamate + NH4(+) + ATP = L-glutamine + ADP + phosphate + H(+). Functionally, the light-modulated chloroplast enzyme, encoded by a nuclear gene and expressed primarily in leaves, is responsible for the reassimilation of the ammonia generated by photorespiration. The chain is Glutamine synthetase leaf isozyme, chloroplastic (GS2) from Pisum sativum (Garden pea).